A 234-amino-acid polypeptide reads, in one-letter code: dTDP-4-amino-4,6-dideoxyglucose formyltransferase (234 aa).

DTDP-4-amino-4,6-dideoxy-alpha-D-glucose contacts are provided by residues Asn-9 and 62-64; that span reads HCK. 65-67 serves as a coordination point for (6R)-10-formyltetrahydrofolate; it reads QRF. His-81 (proton acceptor) is an active-site residue. 90-94 provides a ligand contact to dTDP-4-amino-4,6-dideoxy-alpha-D-glucose; sequence GWFPQ. Positions 112, 116, and 175 each coordinate (6R)-10-formyltetrahydrofolate. DTDP-4-amino-4,6-dideoxy-alpha-D-glucose is bound at residue Asn-209.

This sequence belongs to the dTDP-Qui4N formyltransferase family. As to quaternary structure, homodimer.

It carries out the reaction dTDP-4-amino-4,6-dideoxy-alpha-D-glucose + (6R)-10-formyltetrahydrofolate = dTDP-4-formamido-4,6-dideoxy-alpha-D-glucose + (6S)-5,6,7,8-tetrahydrofolate + H(+). Sugar N-formyltransferase that catalyzes the conversion of dTDP-4-amino-4,6-dideoxyglucose into dTDP-4-formamido-4,6-dideoxyglucose using N(10)-formyltetrahydrofolate as the carbon source. Plays a role in virulence. The polypeptide is dTDP-4-amino-4,6-dideoxyglucose formyltransferase (Mycobacterium bovis (strain ATCC BAA-935 / AF2122/97)).